A 423-amino-acid chain; its full sequence is Polyglutamylase complex subunit TTLL1 (423 aa).

One can recognise a TTL domain in the interval 1–367 (MAGRVKWVTD…NGEIPDCKWN (367 aa)). Residues K138, 144–145 (QG), 181–184 (SVYI), and 194–196 (KFD) each bind ATP. Q144 provides a ligand contact to a protein. R220 provides a ligand contact to L-glutamate. Position 241 to 242 (241 to 242 (TN)) interacts with ATP. K259 is an L-glutamate binding site. Mg(2+) is bound by residues D313, E326, and N328. K344 is an L-glutamate binding site. Positions 390-423 (DGAERELRNRPGQPVGPRAGRSRDSGRSVLTTWK) are disordered.

It belongs to the tubulin polyglutamylase family. Part of the neuronal tubulin polyglutamylase complex which contains TPGS1, TPGS2, TTLL1, LRRC49 and NICN1. Interacts with PCM1, CSTPP1 and LRRC49. Mg(2+) serves as cofactor. Highly expressed in brain, heart and kidney. Expressed in liver, lung, muscle, spleen, testis and trachea. In the brain, expressed in ependymal cilia, cortex, corpus callosum and striatum. Expressed in blastomere.

The protein resides in the cytoplasm. It localises to the cytoskeleton. It is found in the cilium basal body. Its subcellular location is the cilium axoneme. The protein localises to the cell projection. The protein resides in the cilium. It localises to the flagellum. It carries out the reaction (L-glutamyl)(n)-gamma-L-glutamyl-L-glutamyl-[protein] + L-glutamate + ATP = (L-glutamyl)(n+1)-gamma-L-glutamyl-L-glutamyl-[protein] + ADP + phosphate + H(+). Its function is as follows. Catalytic subunit of a polyglutamylase complex which modifies tubulin, generating side chains of glutamate on the gamma-carboxyl group of specific glutamate residues within the C-terminal tail of tubulin. Probably involved in the side-chain elongation step of the polyglutamylation reaction rather than the initiation step. Modifies both alpha- and beta-tubulins with a preference for the alpha-tail. Unlike most polyglutamylases of the tubulin--tyrosine ligase family, only displays a catalytic activity when in complex with other proteins as it is most likely lacking domains important for autonomous activity. Part of the neuronal tubulin polyglutamylase complex. Mediates cilia and flagella polyglutamylation which is essential for their biogenesis and motility. Involved in respiratory motile cilia function through the regulation of beating asymmetry. Essential for sperm flagella biogenesis, motility and male fertility. Also mediates glutamylation of non-tubulin proteins. Involved in KLF4 glutamylation which impedes its ubiquitination, thereby leading to somatic cell reprogramming, pluripotency maintenance and embryogenesis. This Mus musculus (Mouse) protein is Polyglutamylase complex subunit TTLL1.